Reading from the N-terminus, the 479-residue chain is Ribosomal RNA small subunit methyltransferase F (479 aa).

Residues 125 to 131, Glu149, Asp176, and Asp194 each bind S-adenosyl-L-methionine; that span reads AAAPGSK. Catalysis depends on Cys247, which acts as the Nucleophile.

The protein belongs to the class I-like SAM-binding methyltransferase superfamily. RsmB/NOP family.

It localises to the cytoplasm. The enzyme catalyses cytidine(1407) in 16S rRNA + S-adenosyl-L-methionine = 5-methylcytidine(1407) in 16S rRNA + S-adenosyl-L-homocysteine + H(+). Its function is as follows. Specifically methylates the cytosine at position 1407 (m5C1407) of 16S rRNA. This is Ribosomal RNA small subunit methyltransferase F from Salmonella schwarzengrund (strain CVM19633).